A 115-amino-acid chain; its full sequence is uncharacterized protein (115 aa).

The next 3 membrane-spanning stretches (helical) occupy residues 23–43 (LVYA…LFFA), 63–83 (AMVT…VVMV), and 90–110 (NVVI…YVAA).

The protein resides in the cell membrane. This is an uncharacterized protein from Mycobacterium bovis (strain ATCC BAA-935 / AF2122/97).